A 577-amino-acid chain; its full sequence is Signal peptide peptidase-like 2B (577 aa).

The N-terminal stretch at 1 to 19 is a signal peptide; sequence MAAARLAASLLLLAAQVAC. Topologically, residues 20–168 are lumenal; that stretch reads EFGVLRVVPQ…APSEPVMDYN (149 aa). Positions 49–149 constitute a PA domain; that stretch reads LPHDLNKVSL…RDLQDIFRRF (101 aa). The N-linked (GlcNAc...) asparagine glycan is linked to N91. Residues 169-189 form a helical membrane-spanning segment; the sequence is MVIIFIMAVGTVALGGYWAGS. Topologically, residues 190-216 are cytoplasmic; it reads HDVKKYMKHKRDDVPEKQEDEAVDVTP. The helical transmembrane segment at 217-237 threads the bilayer; it reads VMICVFVVMCCFMLVLLYYFY. At 238–239 the chain is on the lumenal side; sequence DR. Residues 240-260 traverse the membrane as a helical segment; it reads LVYVIIGIFCLASSTGLYSCL. Over 261–286 the chain is Cytoplasmic; it reads APCVRKLPFCTCRVPDNNLPYFHKRP. Residues 287–307 traverse the membrane as a helical segment; that stretch reads QARMLLLALFCVTVSVVWGVF. The Lumenal portion of the chain corresponds to 308 to 312; it reads RNEDQ. A helical membrane pass occupies residues 313–333; sequence WAWVLQDTLGIAFCLYMLRTI. The Cytoplasmic segment spans residues 334 to 341; it reads RLPTFKAC. Residues 342 to 362 traverse the membrane as a helical segment; sequence TLLLLVLFVYDIFFVFITPYL. Residue D352 is part of the active site. Residues 363–405 lie on the Lumenal side of the membrane; it reads TKSGNSIMVEVATGPSNSSTHEKLPMVLKVPRLNTSPLSLCDR. Residues 406 to 426 traverse the membrane as a helical segment; it reads PFSLLGFGDILVPGLLVAYCH. D414 is a catalytic residue. Topologically, residues 427–438 are cytoplasmic; it reads RFDIQVQSSRIY. Residues 439 to 459 form a helical membrane-spanning segment; the sequence is FVACTIAYGLGLLVTFVALVL. The Lumenal portion of the chain corresponds to 460-463; the sequence is MRHG. A helical membrane pass occupies residues 464–484; it reads QPALLYLVPCTLLTSCTVALW. The PAL motif lies at 465–467; that stretch reads PAL. At 485-577 the chain is on the cytoplasmic side; it reads RREMGAFWTG…IPVVTPGTSA (93 aa). The disordered stretch occupies residues 502-577; sequence QTPWAAPQGP…IPVVTPGTSA (76 aa).

It belongs to the peptidase A22B family. Monomer. Homodimer. Interacts with ITM2B and TNF. Glycosylated.

Its subcellular location is the cell membrane. It localises to the golgi apparatus membrane. It is found in the lysosome membrane. The protein resides in the endosome membrane. The protein localises to the membrane. Intramembrane-cleaving aspartic protease (I-CLiP) that cleaves type II membrane signal peptides in the hydrophobic plane of the membrane. Functions in ITM2B and TNF processing. Catalyzes the intramembrane cleavage of the anchored fragment of shed TNF-alpha (TNF), which promotes the release of the intracellular domain (ICD) for signaling to the nucleus. May play a role in the regulation of innate and adaptive immunity. The protein is Signal peptide peptidase-like 2B of Rattus norvegicus (Rat).